The sequence spans 61 residues: Small ribosomal subunit protein uS14 (61 aa).

Zn(2+)-binding residues include Cys24, Cys27, Cys40, and Cys43.

Belongs to the universal ribosomal protein uS14 family. Zinc-binding uS14 subfamily. As to quaternary structure, part of the 30S ribosomal subunit. Contacts proteins S3 and S10. The cofactor is Zn(2+).

In terms of biological role, binds 16S rRNA, required for the assembly of 30S particles and may also be responsible for determining the conformation of the 16S rRNA at the A site. This chain is Small ribosomal subunit protein uS14, found in Nitratiruptor sp. (strain SB155-2).